The primary structure comprises 468 residues: 6-phospho-beta-galactosidase (468 aa).

Gln-19, His-116, Asn-159, Glu-160, and Asn-297 together coordinate D-galactose 6-phosphate. The active-site Proton donor is Glu-160. Glu-375 functions as the Nucleophile in the catalytic mechanism. Residues Ser-428, Trp-429, Lys-435, and Tyr-437 each contribute to the D-galactose 6-phosphate site.

Belongs to the glycosyl hydrolase 1 family.

It carries out the reaction a 6-phospho-beta-D-galactoside + H2O = D-galactose 6-phosphate + an alcohol. The protein operates within carbohydrate metabolism; lactose degradation; D-galactose 6-phosphate and beta-D-glucose from lactose 6-phosphate: step 1/1. This is 6-phospho-beta-galactosidase from Streptococcus mutans serotype c (strain ATCC 700610 / UA159).